A 164-amino-acid polypeptide reads, in one-letter code: Telomerase-associated protein of 19 kDa (164 aa).

In terms of assembly, component of the telomerase holoenzyme complex, composed of the catalytic core (the catalytic subunit TERT, the telomerase RNA template component TER and TAP65/p65), which is associated with two heterotrimeric subcomplexes: (i) the replication protein A (RPA)-related subcomplex, composed of TEB1, RPA2/TEB2 and RPA3/TEB3 and (ii) the CST-like subcomplex, composed of TAP75/p75, TAP45/p45 and TAP19/p19. TEB1 and the CST-like subcomplex are tethered to the catalytic core by TAP50/p50.

The protein localises to the chromosome. The protein resides in the telomere. Component of a CST-like subcomplex of the holoenzyme telomerase ribonucleoprotein complex, which stimulates telomerase complementary-strand synthesis. Telomerase is an essential ribonucleoprotein enzyme that copies new telomeric repeats onto chromosome ends by repetitively synthesizing the short telomere-repeat sequence 5'-TTGGGG-3' using an RNA template component TER. The CST-like subcomplex (also named 7-4-1) binds telomeric single-stranded DNA and coordinates telomere G-strand and C-strand synthesis. In Tetrahymena thermophila (strain SB210), this protein is Telomerase-associated protein of 19 kDa.